The primary structure comprises 30 residues: Urease subunit alpha (30 aa).

This sequence belongs to the metallo-dependent hydrolases superfamily. Urease alpha subunit family. As to quaternary structure, heterotrimer of UreA (gamma), UreB (beta) and UreC (alpha) subunits. Three heterotrimers associate to form the active enzyme. Ni cation serves as cofactor.

Its subcellular location is the cytoplasm. It catalyses the reaction urea + 2 H2O + H(+) = hydrogencarbonate + 2 NH4(+). Its pathway is nitrogen metabolism; urea degradation; CO(2) and NH(3) from urea (urease route): step 1/1. The polypeptide is Urease subunit alpha (ureC) (Escherichia coli).